We begin with the raw amino-acid sequence, 270 residues long: ATP synthase subunit a (270 aa).

The next 7 helical transmembrane spans lie at Val-29–Val-49, Ile-87–Phe-107, Pro-108–Pro-128, Asp-140–Ile-160, Pro-182–Ala-202, Leu-220–Trp-240, and Ala-241–Val-261.

It belongs to the ATPase A chain family. F-type ATPases have 2 components, CF(1) - the catalytic core - and CF(0) - the membrane proton channel. CF(1) has five subunits: alpha(3), beta(3), gamma(1), delta(1), epsilon(1). CF(0) has three main subunits: a(1), b(2) and c(9-12). The alpha and beta chains form an alternating ring which encloses part of the gamma chain. CF(1) is attached to CF(0) by a central stalk formed by the gamma and epsilon chains, while a peripheral stalk is formed by the delta and b chains.

It localises to the cell inner membrane. Its function is as follows. Key component of the proton channel; it plays a direct role in the translocation of protons across the membrane. This is ATP synthase subunit a from Chromobacterium violaceum (strain ATCC 12472 / DSM 30191 / JCM 1249 / CCUG 213 / NBRC 12614 / NCIMB 9131 / NCTC 9757 / MK).